Here is a 67-residue protein sequence, read N- to C-terminus: Small ribosomal subunit protein bS21 (67 aa).

This sequence belongs to the bacterial ribosomal protein bS21 family.

This chain is Small ribosomal subunit protein bS21, found in Paramagnetospirillum magneticum (strain ATCC 700264 / AMB-1) (Magnetospirillum magneticum).